The following is a 156-amino-acid chain: Small ribosomal subunit protein uS7 (156 aa).

The protein belongs to the universal ribosomal protein uS7 family. Part of the 30S ribosomal subunit. Contacts proteins S9 and S11.

One of the primary rRNA binding proteins, it binds directly to 16S rRNA where it nucleates assembly of the head domain of the 30S subunit. Is located at the subunit interface close to the decoding center, probably blocks exit of the E-site tRNA. The chain is Small ribosomal subunit protein uS7 from Pseudomonas syringae pv. tomato (strain ATCC BAA-871 / DC3000).